A 1079-amino-acid chain; its full sequence is Eukaryotic translation initiation factor 5B (1079 aa).

The disordered stretch occupies residues 1–478 (MGKKGKKSGY…QAAPAESNVS (478 aa)). Positions 22-38 (SGQNEYLDNTSQDSPQN) are enriched in polar residues. Over residues 57–67 (SKKKKGKKNKG) the composition is skewed to basic residues. Residues S73, S77, and S82 each carry the phosphoserine modification. Positions 105 to 114 (KKGKKGKKSK) are enriched in basic residues. A Phosphoserine modification is found at S127. A compositionally biased stretch (low complexity) spans 160–169 (NNNESEAAAP). A compositionally biased stretch (basic and acidic residues) spans 173–192 (PEVRVKTKKEKEREKKEREK). The segment covering 193–204 (LRKKQQQAKKKG) has biased composition (basic residues). Residues 207 to 233 (GEDTLASSEVSSEVDISTPAENDSSAK) are compositionally biased toward polar residues. Over residues 253 to 293 (MLEEKRAREEEEQRIREEEARIAEEEKRLAEVEEARKEEAR) the composition is skewed to basic and acidic residues. Low complexity-rich tracts occupy residues 321 to 334 (QQAL…QMLE) and 361 to 376 (RSGT…LESS). Phosphothreonine is present on T364. The span at 385-408 (EPQKDSKDDSEKVEKETEVERKEE) shows a compositional bias: basic and acidic residues. The span at 409–431 (NEAEAEAVFDDWEAALEEPEVAE) shows a compositional bias: acidic residues. Basic and acidic residues predominate over residues 436–466 (VTEKKETDIKSDAVEHSIKDKEDSKTDKVDD). Residues 482 to 700 (LRSPICCILG…LISLTQTRMS (219 aa)) enclose the tr-type G domain. Positions 491–498 (GHVDTGKT) are G1. 491-498 (GHVDTGKT) contacts GTP. The segment at 516-520 (GITQQ) is G2. The interval 555–558 (DTPG) is G3. A G4 region spans residues 609–612 (NKVD). The tract at residues 677-679 (SAQ) is G5.

The protein belongs to the TRAFAC class translation factor GTPase superfamily. Classic translation factor GTPase family. IF-2 subfamily. A monovalent cation is required as a cofactor.

The protein localises to the cytoplasm. It catalyses the reaction GTP + H2O = GDP + phosphate + H(+). Functionally, plays a role in translation initiation. Translational GTPase that catalyzes the joining of the 40S and 60S subunits to form the 80S initiation complex with the initiator methionine-tRNA in the P-site base paired to the start codon. GTP binding and hydrolysis induces conformational changes in the enzyme that renders it active for productive interactions with the ribosome. The release of the enzyme after formation of the initiation complex is a prerequisite to form elongation-competent ribosomes. The chain is Eukaryotic translation initiation factor 5B from Schizosaccharomyces pombe (strain 972 / ATCC 24843) (Fission yeast).